Consider the following 223-residue polypeptide: Protein Mis18-alpha (223 aa).

Residues M1–K30 are disordered. A compositionally biased stretch (polar residues) spans P9–H18. Residues K21–K30 are compositionally biased toward basic and acidic residues. 3 positions are modified to phosphoserine: S33, S36, and S37. The region spanning P71–L169 is the Mis18 domain. Zn(2+) is bound by residues C76, C79, C132, and C135. A Glycyl lysine isopeptide (Lys-Gly) (interchain with G-Cter in SUMO2) cross-link involves residue K153. Residue S223 is modified to Phosphoserine.

It belongs to the mis18 family. As to quaternary structure, homodimer, and heterodimer with OIP5/MIS18B. Identified in a complex containing MIS18A, OIP5/MIS18B, MIS18BP1, RBBP7 and RBBP4.

The protein localises to the nucleus. It is found in the chromosome. The protein resides in the centromere. In terms of biological role, required for recruitment of CENPA to centromeres and normal chromosome segregation during mitosis. This Rattus norvegicus (Rat) protein is Protein Mis18-alpha (Mis18a).